A 513-amino-acid polypeptide reads, in one-letter code: MTPAHKVLLCILDGWGIRQERDNNAIVLAGTPHLDKLASPYPFTELQTAGLAVGLPEGQMGNSEVGHTNIGAGRIVYQDLVRINRAAESGELAQNPVLRAALDGVKADGKALHLLGLVSPGGVHSSMDHLFALLKAAKERNVAHVYVHAFLDGRDTPPQSALGYVEELERFLHETHTGRIATVTGRFYAMDRDKRWDRVHQAYEALVFGRGPKAPDALSAIRASYAEKVTDEFVKPTVLAAGDGTPVGRIQDGDAVIFFNFRADRARELTQALAFPEFKEFDRGGLRLGRYVCMTQYDETFKLPALFEPDQPQDIFPELLSRQGLRQFRTAETEKYAHVTFFFNGGREVVYAGEDRHLVPSPRDVKTYDLKPEMSAYEVTAELVKRLDSGKYDFALVNFANPDMVGHSGRLDAAMKAVKAVDECLGALGKACERNGWVLAISADHGNCEQMVDLETGEPHTAHTLNPVPFHLIHPDFRGQKLRPGILADIAPTLCKVMGLPQSKEMNRQGLLP.

Residues Asp13 and Ser63 each contribute to the Mn(2+) site. Ser63 (phosphoserine intermediate) is an active-site residue. Substrate contacts are provided by residues His124, 154-155 (RD), Arg186, Arg192, 262-265 (RADR), and Lys335. Positions 403, 407, 444, 445, and 463 each coordinate Mn(2+).

Belongs to the BPG-independent phosphoglycerate mutase family. In terms of assembly, monomer. The cofactor is Mn(2+).

The enzyme catalyses (2R)-2-phosphoglycerate = (2R)-3-phosphoglycerate. The protein operates within carbohydrate degradation; glycolysis; pyruvate from D-glyceraldehyde 3-phosphate: step 3/5. In terms of biological role, catalyzes the interconversion of 2-phosphoglycerate and 3-phosphoglycerate. The sequence is that of 2,3-bisphosphoglycerate-independent phosphoglycerate mutase from Myxococcus xanthus (strain DK1622).